A 679-amino-acid polypeptide reads, in one-letter code: Sodium-dependent phosphate transporter 1 (679 aa).

The next 6 membrane-spanning stretches (helical) occupy residues 21–41 (YLWM…SVGA), 62–82 (ACIL…AKVS), 100–120 (GLLM…QLVA), 158–178 (IVMS…ILFF), 203–223 (ACTV…LLGF), and 230–250 (GTIL…WFFV). 2 positions are modified to phosphoserine: Ser265 and Ser269. The tract at residues 268–288 (ESPLMEKKNSLKEDHEETKLS) is disordered. The span at 271–286 (LMEKKNSLKEDHEETK) shows a compositional bias: basic and acidic residues. 4 helical membrane-spanning segments follow: residues 511-531 (VSLL…FAHG), 558-578 (VATP…GLWV), 600-620 (FSIE…GLPI), and 650-670 (IFMA…AIMA). The segment at 550-558 (DTGDVSSKV) is a.

The protein belongs to the inorganic phosphate transporter (PiT) (TC 2.A.20) family.

It localises to the cell membrane. The catalysed reaction is 2 Na(+)(out) + phosphate(out) = 2 Na(+)(in) + phosphate(in). In terms of biological role, sodium-phosphate symporter which preferentially transports the monovalent form of phosphate with a stoichiometry of two sodium ions per phosphate ion. May play a role in extracellular matrix and cartilage calcification as well as in vascular calcification. Essential for cell proliferation but this function is independent of its phosphate transporter activity. The protein is Sodium-dependent phosphate transporter 1 (SLC20A1) of Pongo abelii (Sumatran orangutan).